The primary structure comprises 215 residues: Thymidylate kinase (215 aa).

7–14 (GLDGSGKT) serves as a coordination point for ATP.

This sequence belongs to the thymidylate kinase family.

It carries out the reaction dTMP + ATP = dTDP + ADP. Its function is as follows. Phosphorylation of dTMP to form dTDP in both de novo and salvage pathways of dTTP synthesis. This chain is Thymidylate kinase, found in Mycoplasmopsis agalactiae (strain NCTC 10123 / CIP 59.7 / PG2) (Mycoplasma agalactiae).